Consider the following 401-residue polypeptide: Exodeoxyribonuclease 7 large subunit (401 aa).

Belongs to the XseA family. In terms of assembly, heterooligomer composed of large and small subunits.

It is found in the cytoplasm. The catalysed reaction is Exonucleolytic cleavage in either 5'- to 3'- or 3'- to 5'-direction to yield nucleoside 5'-phosphates.. Functionally, bidirectionally degrades single-stranded DNA into large acid-insoluble oligonucleotides, which are then degraded further into small acid-soluble oligonucleotides. The sequence is that of Exodeoxyribonuclease 7 large subunit from Clostridioides difficile (strain 630) (Peptoclostridium difficile).